We begin with the raw amino-acid sequence, 245 residues long: 8-amino-3,8-dideoxy-manno-octulosonate cytidylyltransferase (245 aa).

It belongs to the KdsB family.

It localises to the cytoplasm. It catalyses the reaction 8-amino-3,8-dideoxy-alpha-D-manno-octulosonate + CTP = CMP-8-amino-3,8-dideoxy-alpha-D-manno-oct-2-ulosonate + diphosphate. It functions in the pathway bacterial outer membrane biogenesis; lipopolysaccharide biosynthesis. Functionally, activates KDO8N (a required 8-carbon sugar) for incorporation into bacterial lipopolysaccharide in the Shewanella genus. The polypeptide is 8-amino-3,8-dideoxy-manno-octulosonate cytidylyltransferase (Shewanella frigidimarina (strain NCIMB 400)).